Here is a 698-residue protein sequence, read N- to C-terminus: Elongation factor G (698 aa).

A tr-type G domain is found at 10–285 (ASTRNIGIMA…AVVDFLPNPL (276 aa)). Residues 19 to 26 (AHIDAGKT), 83 to 87 (DTPGH), and 137 to 140 (NKMD) contribute to the GTP site.

This sequence belongs to the TRAFAC class translation factor GTPase superfamily. Classic translation factor GTPase family. EF-G/EF-2 subfamily.

The protein localises to the cytoplasm. Catalyzes the GTP-dependent ribosomal translocation step during translation elongation. During this step, the ribosome changes from the pre-translocational (PRE) to the post-translocational (POST) state as the newly formed A-site-bound peptidyl-tRNA and P-site-bound deacylated tRNA move to the P and E sites, respectively. Catalyzes the coordinated movement of the two tRNA molecules, the mRNA and conformational changes in the ribosome. The sequence is that of Elongation factor G from Frankia alni (strain DSM 45986 / CECT 9034 / ACN14a).